The chain runs to 23 residues: EQCGRQAGGATCPNNLCCSQYGY.

It belongs to the glycosyl hydrolase 19 family. Chitinase class I subfamily.

The catalysed reaction is Random endo-hydrolysis of N-acetyl-beta-D-glucosaminide (1-&gt;4)-beta-linkages in chitin and chitodextrins.. In terms of biological role, defense against chitin-containing fungal pathogens. This chain is Endochitinase B, found in Pisum sativum (Garden pea).